The following is a 357-amino-acid chain: Holliday junction branch migration complex subunit RuvB (357 aa).

The disordered stretch occupies residues 1 to 27; it reads MGRFDDAGAQDAEPDDRDVSPALTVGE. The tract at residues 1 to 195 is large ATPase domain (RuvB-L); sequence MGRFDDAGAQ…FGFTAHMDFY (195 aa). Residues L34, R35, G76, K79, T80, S81, 142–144, R185, Y195, and R232 each bind ATP; that span reads EDF. T80 contributes to the Mg(2+) binding site. Positions 196-266 are small ATPAse domain (RuvB-S); sequence EPAELERVLA…IAKAALEVYD (71 aa). The tract at residues 269 to 357 is head domain (RuvB-H); that stretch reads ELGLDRLDRA…TGLGQTGLFD (89 aa). Residues R324 and R329 each coordinate DNA.

The protein belongs to the RuvB family. Homohexamer. Forms an RuvA(8)-RuvB(12)-Holliday junction (HJ) complex. HJ DNA is sandwiched between 2 RuvA tetramers; dsDNA enters through RuvA and exits via RuvB. An RuvB hexamer assembles on each DNA strand where it exits the tetramer. Each RuvB hexamer is contacted by two RuvA subunits (via domain III) on 2 adjacent RuvB subunits; this complex drives branch migration. In the full resolvosome a probable DNA-RuvA(4)-RuvB(12)-RuvC(2) complex forms which resolves the HJ.

It localises to the cytoplasm. It carries out the reaction ATP + H2O = ADP + phosphate + H(+). Functionally, the RuvA-RuvB-RuvC complex processes Holliday junction (HJ) DNA during genetic recombination and DNA repair, while the RuvA-RuvB complex plays an important role in the rescue of blocked DNA replication forks via replication fork reversal (RFR). RuvA specifically binds to HJ cruciform DNA, conferring on it an open structure. The RuvB hexamer acts as an ATP-dependent pump, pulling dsDNA into and through the RuvAB complex. RuvB forms 2 homohexamers on either side of HJ DNA bound by 1 or 2 RuvA tetramers; 4 subunits per hexamer contact DNA at a time. Coordinated motions by a converter formed by DNA-disengaged RuvB subunits stimulates ATP hydrolysis and nucleotide exchange. Immobilization of the converter enables RuvB to convert the ATP-contained energy into a lever motion, pulling 2 nucleotides of DNA out of the RuvA tetramer per ATP hydrolyzed, thus driving DNA branch migration. The RuvB motors rotate together with the DNA substrate, which together with the progressing nucleotide cycle form the mechanistic basis for DNA recombination by continuous HJ branch migration. Branch migration allows RuvC to scan DNA until it finds its consensus sequence, where it cleaves and resolves cruciform DNA. The chain is Holliday junction branch migration complex subunit RuvB from Mycobacterium sp. (strain JLS).